A 322-amino-acid polypeptide reads, in one-letter code: ATP-dependent 6-phosphofructokinase (322 aa).

G11 is an ATP binding site. 21–25 (RAVTR) is an ADP binding site. Residues 72–73 (RC) and 102–105 (GDGS) each bind ATP. Mg(2+) is bound at residue D103. 127–129 (TID) lines the substrate pocket. Catalysis depends on D129, which acts as the Proton acceptor. R156 contributes to the ADP binding site. Substrate contacts are provided by residues R164 and 171–173 (MGR). Residues 187 to 189 (GAE), R213, and 215 to 217 (KKH) contribute to the ADP site. Residues E224, R245, and 251 to 254 (HIQR) each bind substrate.

The protein belongs to the phosphofructokinase type A (PFKA) family. ATP-dependent PFK group I subfamily. Prokaryotic clade 'B1' sub-subfamily. As to quaternary structure, homotetramer. It depends on Mg(2+) as a cofactor.

Its subcellular location is the cytoplasm. The enzyme catalyses beta-D-fructose 6-phosphate + ATP = beta-D-fructose 1,6-bisphosphate + ADP + H(+). The protein operates within carbohydrate degradation; glycolysis; D-glyceraldehyde 3-phosphate and glycerone phosphate from D-glucose: step 3/4. Allosterically activated by ADP and other diphosphonucleosides, and allosterically inhibited by phosphoenolpyruvate. Functionally, catalyzes the phosphorylation of D-fructose 6-phosphate to fructose 1,6-bisphosphate by ATP, the first committing step of glycolysis. This Staphylococcus epidermidis (strain ATCC 12228 / FDA PCI 1200) protein is ATP-dependent 6-phosphofructokinase.